The primary structure comprises 67 residues: Large ribosomal subunit protein bL35 (67 aa).

The protein belongs to the bacterial ribosomal protein bL35 family.

This is Large ribosomal subunit protein bL35 from Methylorubrum extorquens (strain CM4 / NCIMB 13688) (Methylobacterium extorquens).